Here is a 103-residue protein sequence, read N- to C-terminus: Co-chaperonin GroES (103 aa).

This sequence belongs to the GroES chaperonin family. Heptamer of 7 subunits arranged in a ring. Interacts with the chaperonin GroEL.

It localises to the cytoplasm. Its function is as follows. Together with the chaperonin GroEL, plays an essential role in assisting protein folding. The GroEL-GroES system forms a nano-cage that allows encapsulation of the non-native substrate proteins and provides a physical environment optimized to promote and accelerate protein folding. GroES binds to the apical surface of the GroEL ring, thereby capping the opening of the GroEL channel. The protein is Co-chaperonin GroES of Rippkaea orientalis (strain PCC 8801 / RF-1) (Cyanothece sp. (strain PCC 8801)).